A 397-amino-acid polypeptide reads, in one-letter code: Major outer membrane porin, serovar H (397 aa).

The signal sequence occupies residues 1 to 22; it reads MKKLLKSVLVFAALSSASSLQA.

Belongs to the chlamydial porin (CP) (TC 1.B.2) family. In terms of assembly, part of a disulfide cross-linked outer membrane complex (COMC) composed of the major outer membrane porin (MOMP), the small cysteine-rich protein (OmcA) and the large cysteine-rich periplasmic protein (OmcB).

Its subcellular location is the cell outer membrane. In elementary bodies (EBs, the infectious stage, which is able to survive outside the host cell) provides the structural integrity of the outer envelope through disulfide cross-links with the small cysteine-rich protein and the large cysteine-rich periplasmic protein. It has been described in publications as the Sarkosyl-insoluble COMC (Chlamydia outer membrane complex), and serves as the functional equivalent of peptidoglycan. In terms of biological role, permits diffusion of specific solutes through the outer membrane. In Chlamydia trachomatis, this protein is Major outer membrane porin, serovar H (ompA).